The chain runs to 379 residues: Chaperone protein DnaJ (379 aa).

Residues aspartate 5 to glycine 70 form the J domain. The CR-type zinc-finger motif lies at glycine 134 to threonine 212. Residues cysteine 147, cysteine 150, cysteine 164, cysteine 167, cysteine 186, cysteine 189, cysteine 200, and cysteine 203 each coordinate Zn(2+). CXXCXGXG motif repeat units lie at residues cysteine 147–glycine 154, cysteine 164–glycine 171, cysteine 186–glycine 193, and cysteine 200–glycine 207.

This sequence belongs to the DnaJ family. Homodimer. It depends on Zn(2+) as a cofactor.

It localises to the cytoplasm. In terms of biological role, participates actively in the response to hyperosmotic and heat shock by preventing the aggregation of stress-denatured proteins and by disaggregating proteins, also in an autonomous, DnaK-independent fashion. Unfolded proteins bind initially to DnaJ; upon interaction with the DnaJ-bound protein, DnaK hydrolyzes its bound ATP, resulting in the formation of a stable complex. GrpE releases ADP from DnaK; ATP binding to DnaK triggers the release of the substrate protein, thus completing the reaction cycle. Several rounds of ATP-dependent interactions between DnaJ, DnaK and GrpE are required for fully efficient folding. Also involved, together with DnaK and GrpE, in the DNA replication of plasmids through activation of initiation proteins. The sequence is that of Chaperone protein DnaJ from Aliivibrio fischeri (strain ATCC 700601 / ES114) (Vibrio fischeri).